We begin with the raw amino-acid sequence, 153 residues long: ORM1-like protein 3 (153 aa).

The segment at 1 to 17 (MNVGTAHSEVNPNTRVM) is important for ceramide level-sensing. The Cytoplasmic segment spans residues 1 to 21 (MNVGTAHSEVNPNTRVMNSRG). Transmembrane regions (helical) follow at residues 22–42 (IWLS…SIPF) and 43–63 (VSVP…MYIF). The Cytoplasmic segment spans residues 64–94 (LHTVKGTPFETPDQGKARLLTHWEQMDYGVQ). The helical transmembrane segment at 95 to 117 (FTASRKFLTITPIVLYFLTSFYT) threads the bilayer. The Extracellular portion of the chain corresponds to 118-121 (KYDQ). Residues 122–142 (VHFILNTVSLMTVLIPKLPQL) form a helical membrane-spanning segment. Pro-137 carries the hydroxyproline modification. Topologically, residues 143-153 (HGVRIFGINKY) are cytoplasmic.

Belongs to the ORM family. Ceramide-sensitive subunit of the serine palmitoyltransferase (SPT) complex, which is also composed of SPTLC1, SPTLC2/3 and SPTSSA/B. Post-translationally, when hydroxylated at Pro-137, ubiquitinated via 'Lys-48'-linkage, leading to proteasomal degradation. In endothelial cells, ORMDL3 proteasomal degradation is controlled by the sphingosine 1-phosphate receptor signaling pathway.

The protein localises to the endoplasmic reticulum membrane. In terms of biological role, plays an essential role in the homeostatic regulation of sphingolipid de novo biosynthesis by modulating the activity of the serine palmitoyltransferase (SPT) in response to ceramide levels. When complexed to SPT, the binding of ceramides to its N-terminus stabilizes a conformation that block SPT substrate entry, hence preventing SPT catalytic activity. Through this mechanism, maintains ceramide levels at sufficient concentrations for the production of complex sphingolipids, but which prevents the accumulation of ceramides to levels that trigger apoptosis. This is ORM1-like protein 3 (Ormdl3) from Mus musculus (Mouse).